The primary structure comprises 448 residues: Trigger factor (448 aa).

Positions 172–257 (GDRVTVDFVG…MKKIEWPHLP (86 aa)) constitute a PPIase FKBP-type domain.

Belongs to the FKBP-type PPIase family. Tig subfamily.

Its subcellular location is the cytoplasm. The enzyme catalyses [protein]-peptidylproline (omega=180) = [protein]-peptidylproline (omega=0). In terms of biological role, involved in protein export. Acts as a chaperone by maintaining the newly synthesized protein in an open conformation. Functions as a peptidyl-prolyl cis-trans isomerase. The protein is Trigger factor of Burkholderia lata (strain ATCC 17760 / DSM 23089 / LMG 22485 / NCIMB 9086 / R18194 / 383).